Here is a 1031-residue protein sequence, read N- to C-terminus: Ookinete maturation protein 1 (1031 aa).

Disordered stretches follow at residues 125–184, 340–405, and 609–697; these read HNEN…PELE, KEAE…DGMR, and DAEL…NDSI. A compositionally biased stretch (basic residues) spans 141 to 168; the sequence is QKLKKKKKIKKGTKKKSINKISILKHKS. Residues 171–180 show a composition bias toward polar residues; the sequence is SFPSTQNENT. Basic and acidic residues predominate over residues 340 to 357; it reads KEAEEEERKKNEDEHILE. Residues 377-394 show a composition bias toward polar residues; sequence LGKSFKNNESFELNSPQK. Residues 581–646 are a coiled coil; the sequence is IDEENSVFVE…ETQMAGKEEK (66 aa). Basic and acidic residues predominate over residues 610–648; sequence AELRKDEEEDKSKNNEKDSKSEERDILETQMAGKEEKPV. The segment covering 649 to 659 has biased composition (basic residues); sequence LKKKKKNKGKQ. The span at 660–686 shows a compositional bias: basic and acidic residues; the sequence is RNREGKGVVEKGYDAKREKKENEEKNK.

In the mosquito vector midgut, plays a role in ookinete development. This chain is Ookinete maturation protein 1, found in Plasmodium berghei (strain Anka).